The following is a 138-amino-acid chain: Phospholipase A2 crotoxin basic chain CBa2 (138 aa).

Positions Met-1–Gly-16 are cleaved as a signal peptide. 7 cysteine pairs are disulfide-bonded: Cys-42–Cys-131, Cys-44–Cys-60, Cys-59–Cys-111, Cys-65–Cys-138, Cys-66–Cys-104, Cys-73–Cys-97, and Cys-91–Cys-102. Residues Tyr-43, Gly-45, and Gly-47 each coordinate Ca(2+). Residue His-63 is part of the active site. Asp-64 provides a ligand contact to Ca(2+). Asp-105 is a catalytic residue.

This sequence belongs to the phospholipase A2 family. Group II subfamily. D49 sub-subfamily. Heterodimer of one of the acidic (CA1, CA2, CA3 or CA4) and one of the basic (CBa1, CBa2, CBb, CBc or CBd) subunits; non-covalently linked. The acidic subunit is non-toxic, without enzymatic activity and comprises 3 peptides that are cross-linked by 5 disulfide bridges. The basic subunit is toxic, has phospholipase A2 activity and is composed of a single chain. Multiple variants of each subunit give different crotoxin complexes that can be subdivided into 2 classes: (1) those of high toxicity, low PLA2 activity (CBb, CBc and CBd linked with high affinity to any CA) and high stability (K(d)=4.5 nM) and (2) those of moderate toxicity, high PLA2 activity (CBa2 linked with low affinity to any CA) and low stability (K(d)=25 nM). Interacts with human NBD1 domain of CFTR. The cofactor is Ca(2+). As to expression, expressed by the venom gland.

It localises to the secreted. It catalyses the reaction a 1,2-diacyl-sn-glycero-3-phosphocholine + H2O = a 1-acyl-sn-glycero-3-phosphocholine + a fatty acid + H(+). In terms of biological role, heterodimer CA-CB: Crotoxin is a potent presynaptic neurotoxin that possesses phospholipase A2 (PLA2) activity and exerts a lethal action by blocking neuromuscular transmission. It consists of a non-covalent association of a basic and weakly toxic PLA2 subunit (CBa2, CBb, CBc, or CBd), with a small acidic, non-enzymatic and non-toxic subunit (CA1, CA2, CA3 or CA4). The complex acts by binding to a specific 48-kDa protein (R48) receptor located on presynaptic membranes, forming a transient ternary complex CA-CB-R48, followed by dissociation of the CA-CB complex and release of the CA subunit. At equilibrium, only the CB subunits remain associated with the specific crotoxin receptor. In addition to neurotoxicity, crotoxin has been found to exert myotoxicity, nephrotoxicity, and cardiovascular toxicity. Moreover, anti-inflammatory, immunomodulatory, anti-tumor and analgesic effects of crotoxin have also been reported. Monomer CBa2: The basic subunit of crotoxin is a snake venom phospholipase A2 (PLA2) that exhibits weak neurotoxicity (10-fold less than the heterodimer) and strong anticoagulant effects by binding to factor Xa (F10) and inhibiting the prothrombinase activity (IC(50) is 41 nM). In addition, it shows the same effects described for the heterodimer and binds the nucleotide-binding domain (NBD1) of CFTR chloride channels and increases the channel current. PLA2 catalyzes the calcium-dependent hydrolysis of the 2-acyl groups in 3-sn-phosphoglycerides. This is Phospholipase A2 crotoxin basic chain CBa2 from Crotalus durissus terrificus (South American rattlesnake).